Reading from the N-terminus, the 295-residue chain is Methionine aminopeptidase (295 aa).

His62 serves as a coordination point for substrate. 3 residues coordinate a divalent metal cation: Asp82, Asp93, and His153. His161 serves as a coordination point for substrate. 2 residues coordinate a divalent metal cation: Glu187 and Glu280.

Monomer. Co(2+) serves as cofactor. Requires Zn(2+) as cofactor. It depends on Mn(2+) as a cofactor. Fe(2+) is required as a cofactor.

The enzyme catalyses Release of N-terminal amino acids, preferentially methionine, from peptides and arylamides.. Functionally, removes the N-terminal methionine from nascent proteins. The N-terminal methionine is often cleaved when the second residue in the primary sequence is small and uncharged (Met-Ala-, Cys, Gly, Pro, Ser, Thr, or Val). This is Methionine aminopeptidase from Pyrococcus furiosus (strain ATCC 43587 / DSM 3638 / JCM 8422 / Vc1).